Here is a 389-residue protein sequence, read N- to C-terminus: Serpentine receptor class alpha/beta-14 (389 aa).

The Extracellular portion of the chain corresponds to M1–R45. N23 is a glycosylation site (N-linked (GlcNAc...) asparagine). Residues L46–L66 traverse the membrane as a helical segment. Residues L67–S81 lie on the Cytoplasmic side of the membrane. The helical transmembrane segment at L82–Y102 threads the bilayer. The Extracellular segment spans residues H103–C123. Residues C123 and C198 are joined by a disulfide bond. A helical transmembrane segment spans residues A124 to L144. The Cytoplasmic portion of the chain corresponds to A145 to G167. The chain crosses the membrane as a helical span at residues L168–L188. Residues R189–S208 lie on the Extracellular side of the membrane. Residues V209 to L229 traverse the membrane as a helical segment. The Cytoplasmic segment spans residues L230 to S268. Residues I269–I289 traverse the membrane as a helical segment. The Extracellular segment spans residues Y290–P303. A helical transmembrane segment spans residues F304 to V324. At V325 to K389 the chain is on the cytoplasmic side.

This sequence belongs to the nematode receptor-like protein srab family.

The protein localises to the membrane. The sequence is that of Serpentine receptor class alpha/beta-14 from Caenorhabditis elegans.